A 343-amino-acid chain; its full sequence is Protein-glutamate methylesterase/protein-glutamine glutaminase 2 (343 aa).

The Response regulatory domain maps to 5–122; the sequence is KVLVVDDSAI…SVGDMSGQLV (118 aa). Residue Asp56 is modified to 4-aspartylphosphate. A CheB-type methylesterase domain is found at 154–343; that stretch reads AETSNKVIAI…SIADEIVRMV (190 aa). Active-site residues include Ser166, His192, and Asp288.

Belongs to the CheB family. Post-translationally, phosphorylated by CheA. Phosphorylation of the N-terminal regulatory domain activates the methylesterase activity.

It localises to the cytoplasm. The enzyme catalyses [protein]-L-glutamate 5-O-methyl ester + H2O = L-glutamyl-[protein] + methanol + H(+). It carries out the reaction L-glutaminyl-[protein] + H2O = L-glutamyl-[protein] + NH4(+). Involved in chemotaxis. Part of a chemotaxis signal transduction system that modulates chemotaxis in response to various stimuli. Catalyzes the demethylation of specific methylglutamate residues introduced into the chemoreceptors (methyl-accepting chemotaxis proteins or MCP) by CheR. Also mediates the irreversible deamidation of specific glutamine residues to glutamic acid. The chain is Protein-glutamate methylesterase/protein-glutamine glutaminase 2 from Syntrophus aciditrophicus (strain SB).